A 205-amino-acid chain; its full sequence is Lymphotoxin-alpha (205 aa).

An N-terminal signal peptide occupies residues 1–34 (MTPPGRLYLPRVRGTRLLFLLLGLLLALPPRAKG). In terms of domain architecture, THD spans 63-205 (PAAHLVGDPS…SSVFFGAFAL (143 aa)). Asn96 is a glycosylation site (N-linked (GlcNAc...) asparagine). A disulfide bridge links Cys120 with Cys156.

This sequence belongs to the tumor necrosis factor family. In terms of assembly, homotrimer, and heterotrimer of either two LTB and one LTA subunits or (less prevalent) two LTA and one LTB subunits. Interacts with TNFRSF14.

The protein localises to the secreted. It localises to the membrane. In terms of biological role, cytokine that in its homotrimeric form binds to TNFRSF1A/TNFR1, TNFRSF1B/TNFBR and TNFRSF14/HVEM. In its heterotrimeric form with LTB binds to TNFRSF3/LTBR. Lymphotoxin is produced by lymphocytes and is cytotoxic for a wide range of tumor cells in vitro and in vivo. This is Lymphotoxin-alpha (LTA) from Marmota monax (Woodchuck).